We begin with the raw amino-acid sequence, 89 residues long: Small ribosomal subunit protein bS20 (89 aa).

Belongs to the bacterial ribosomal protein bS20 family.

Binds directly to 16S ribosomal RNA. The polypeptide is Small ribosomal subunit protein bS20 (Wolbachia pipientis wMel).